Here is a 543-residue protein sequence, read N- to C-terminus: Glucose transporter HT1 (543 aa).

Residues 1-24 (MPEYPTEDTNASGKTSGSSPDDHT) form a disordered region. The Cytoplasmic portion of the chain corresponds to 1 to 38 (MPEYPTEDTNASGKTSGSSPDDHTDDNAPSFFSCENLC). Residues 7–19 (EDTNASGKTSGSS) are compositionally biased toward polar residues. The helical transmembrane segment at 39 to 59 (IVQVPVSTGSLNGFSIGFVAV) threads the bilayer. The Extracellular portion of the chain corresponds to 60-120 (YMHLYEIFSG…GSGYNSLESG (61 aa)). Asn-90 and Asn-91 each carry an N-linked (GlcNAc...) asparagine glycan. Residues 121-141 (LFACSMIVGSMIGSIFAGKFL) traverse the membrane as a helical segment. Over 142 to 147 (SKFGLK) the chain is Cytoplasmic. The helical transmembrane segment at 148 to 168 (MSFIVSGVLGIVGSALIHVAT) threads the bilayer. Residues 169–172 (RGST) lie on the Extracellular side of the membrane. A helical membrane pass occupies residues 173 to 193 (LWVMCVGRFLMGLVLGLVCVA). The Cytoplasmic portion of the chain corresponds to 194-212 (SPMYVNENAHPKYRKTIGV). The helical transmembrane segment at 213-233 (LFQVFTTFGIMFAALLGLAIV) threads the bilayer. Residues 234–248 (KTPGHDKASGLLWRM) are Extracellular-facing. A helical transmembrane segment spans residues 249–269 (QVFCSVSTALSALLLVLGLVV). Topologically, residues 270-300 (RKSKTSFAGGVDSAGEGVLDPNEYSVRQMLG) are cytoplasmic. A helical membrane pass occupies residues 301 to 321 (PLAVGAVTAGTLQLTGINAVM). The Extracellular segment spans residues 322 to 337 (NYAPEIMRNIGMDPME). Residues 338-358 (GNSAVMSWNFVTALVAIPLVS) form a helical membrane-spanning segment. At 359–364 (RFTMRQ) the chain is on the cytoplasmic side. Residues 365 to 385 (LFLACSFMASCACLIMCGIPV) traverse the membrane as a helical segment. The Extracellular portion of the chain corresponds to 386–400 (YPGVASVDNRNIVAT). The helical transmembrane segment at 401-421 (VGIAVFIAAFEFGVGSCFFVL) threads the bilayer. Residues 422–436 (AQDLFPRSFRPTGSS) lie on the Cytoplasmic side of the membrane. Residues 437–457 (FVVMAQFIFNIMINLLYPITV) form a helical membrane-spanning segment. At 458–470 (EAISGGKGKSPEK) the chain is on the extracellular side. The helical transmembrane segment at 471–491 (GQSVSFIIFGIIGIICFVLQL) threads the bilayer. At 492-543 (RYLTPWEDGQGTSTSPTARCNAPTSPNNGEGEPATADMSPVEMSTPKHSGAA) the chain is on the cytoplasmic side. The span at 503-519 (TSTSPTARCNAPTSPNN) shows a compositional bias: polar residues. The interval 503-543 (TSTSPTARCNAPTSPNNGEGEPATADMSPVEMSTPKHSGAA) is disordered.

This sequence belongs to the major facilitator superfamily. Sugar transporter (TC 2.A.1.1) family.

The protein localises to the membrane. Facilitative glucose transporter. Binds D-fructose and cytochalasin-B, but not D-galactose. In Trypanosoma vivax (Duttonella vivax), this protein is Glucose transporter HT1 (HT1).